Consider the following 517-residue polypeptide: ATP synthase subunit alpha (517 aa).

174-181 (GDRQTGKT) contacts ATP.

Belongs to the ATPase alpha/beta chains family. As to quaternary structure, F-type ATPases have 2 components, CF(1) - the catalytic core - and CF(0) - the membrane proton channel. CF(1) has five subunits: alpha(3), beta(3), gamma(1), delta(1), epsilon(1). CF(0) has four main subunits: a(1), b(1), b'(1) and c(9-12).

It is found in the cell inner membrane. It carries out the reaction ATP + H2O + 4 H(+)(in) = ADP + phosphate + 5 H(+)(out). Its function is as follows. Produces ATP from ADP in the presence of a proton gradient across the membrane. The alpha chain is a regulatory subunit. In Methylibium petroleiphilum (strain ATCC BAA-1232 / LMG 22953 / PM1), this protein is ATP synthase subunit alpha.